The primary structure comprises 548 residues: Folylpolyglutamate synthase (548 aa).

ATP is bound at residue 130-133; sequence GKGS. Mg(2+) is bound by residues Ser-157, Glu-234, and His-262. ATP is bound by residues Arg-382 and Asp-396.

This sequence belongs to the folylpolyglutamate synthase family. A monovalent cation serves as cofactor.

The protein resides in the mitochondrion inner membrane. Its subcellular location is the mitochondrion matrix. It is found in the cytoplasm. The enzyme catalyses (6S)-5,6,7,8-tetrahydrofolyl-(gamma-L-Glu)(n) + L-glutamate + ATP = (6S)-5,6,7,8-tetrahydrofolyl-(gamma-L-Glu)(n+1) + ADP + phosphate + H(+). The protein operates within cofactor biosynthesis; tetrahydrofolylpolyglutamate biosynthesis. In terms of biological role, catalyzes conversion of folates to polyglutamate derivatives allowing concentration of folate compounds in the cell and the intracellular retention of these cofactors, which are important substrates for most of the folate-dependent enzymes that are involved in one-carbon transfer reactions involved in purine, pyrimidine and amino acid synthesis. Required for methionine synthesis and maintenance of intact mitochondrial DNA. Involved in telomere maintenance. This Saccharomyces cerevisiae (strain FostersB) (Baker's yeast) protein is Folylpolyglutamate synthase.